The chain runs to 295 residues: Ethanolamine ammonia-lyase small subunit (295 aa).

Residues V208 and E229 each contribute to the adenosylcob(III)alamin site.

This sequence belongs to the EutC family. The basic unit is a heterodimer which dimerizes to form tetramers. The heterotetramers trimerize; 6 large subunits form a core ring with 6 small subunits projecting outwards. The cofactor is adenosylcob(III)alamin.

It is found in the bacterial microcompartment. It catalyses the reaction ethanolamine = acetaldehyde + NH4(+). It functions in the pathway amine and polyamine degradation; ethanolamine degradation. Its function is as follows. Catalyzes the deamination of various vicinal amino-alcohols to oxo compounds. Allows this organism to utilize ethanolamine as the sole source of nitrogen and carbon in the presence of external vitamin B12. In Fusobacterium nucleatum subsp. nucleatum (strain ATCC 25586 / DSM 15643 / BCRC 10681 / CIP 101130 / JCM 8532 / KCTC 2640 / LMG 13131 / VPI 4355), this protein is Ethanolamine ammonia-lyase small subunit.